Reading from the N-terminus, the 109-residue chain is Phosphoribosyl-ATP pyrophosphatase (109 aa).

Belongs to the PRA-PH family.

The protein resides in the cytoplasm. The catalysed reaction is 1-(5-phospho-beta-D-ribosyl)-ATP + H2O = 1-(5-phospho-beta-D-ribosyl)-5'-AMP + diphosphate + H(+). It participates in amino-acid biosynthesis; L-histidine biosynthesis; L-histidine from 5-phospho-alpha-D-ribose 1-diphosphate: step 2/9. This Geobacter metallireducens (strain ATCC 53774 / DSM 7210 / GS-15) protein is Phosphoribosyl-ATP pyrophosphatase.